The following is a 2731-amino-acid chain: Teneurin-1 (2731 aa).

Positions 1 to 72 (MEQTDCKPYQ…KRKDVEKSTQ (72 aa)) are disordered. The 318-residue stretch at 1 to 318 (MEQTDCKPYQ…KPYRCCNWKC (318 aa)) folds into the Teneurin N-terminal domain. At 1 to 324 (MEQTDCKPYQ…NWKCTALSAT (324 aa)) the chain is on the cytoplasmic side. Basic and acidic residues predominate over residues 44–55 (ETLHEYNQELRR). Residues 62-65 (RKRK) carry the Nuclear localization signal (NLS) motif. S105 carries the post-translational modification Phosphoserine. A Phosphothreonine modification is found at T109. Phosphoserine is present on S116. A disordered region spans residues 175–241 (DSAQDMQSSP…PAPPTSTQDS (67 aa)). Positions 178-189 (QDMQSSPHNQFT) are enriched in polar residues. Over residues 192–201 (PLPPPPPPPH) the composition is skewed to pro residues. The segment covering 214–224 (DSLQRRSMTTR) has biased composition (polar residues). Residues 290–297 (PPPRPLPR) carry the Required for interaction with SORBS1 (Ten-1 ICD form) motif. The chain crosses the membrane as a helical span at residues 325-345 (AITVTLALLLAYVIAVHLFGL). The Extracellular segment spans residues 346 to 2731 (TWQLQPVGQI…FMRQSEIGRR (2386 aa)). N432 carries an N-linked (GlcNAc...) asparagine glycan. EGF-like domains lie at 527 to 558 (IMDD…PDCA), 559 to 590 (RDSC…ECDV), 591 to 623 (PEEQ…EICE), 624 to 656 (EEDC…NCET), 657 to 690 (PLPI…SDCS), 691 to 720 (TELC…GPTC), 721 to 752 (EERS…DHCT), and 760 to 795 (VRDG…TGCN). Disulfide bonds link C531–C541, C535–C546, C548–C557, C566–C577, C579–C588, C595–C606, C600–C611, C613–C622, C627–C638, C632–C643, C645–C654, C665–C678, C680–C689, C694–C704, C698–C709, C711–C720, C725–C735, C729–C740, C742–C751, C764–C774, C768–C783, and C785–C794. 2 N-linked (GlcNAc...) asparagine glycosylation sites follow: N904 and N1083. NHL repeat units lie at residues 1193 to 1218 (LFAP…VRRI), 1298 to 1342 (SHCG…NAVI), 1357 to 1408 (LSCD…IAGR), 1420 to 1464 (FLVS…VTTN), and 1487 to 1530 (CFSG…ISKN). The stretch at 1540-1559 (YEIASPADQELYQFTVNGTH) is one YD 1 repeat. 2 N-linked (GlcNAc...) asparagine glycosylation sites follow: N1556 and N1573. YD repeat units lie at residues 1576–1596 (YNAE…VHIR), 1614–1638 (YWLT…ALMT), 1639–1660 (YPGN…TVYE), and 1661–1681 (YDPE…SSFH). N1669, N1705, N1743, N1763, N1787, and N1848 each carry an N-linked (GlcNAc...) asparagine glycan. 11 YD repeats span residues 1851-1870 (YSPS…EKME), 1871-1891 (YDQS…WSYT), 1892-1910 (YLEK…YIFE), 1911-1931 (YDQS…HSLQ), 1939-1955 (YRNI…FIQD), 1956-1975 (YSRD…RRVL), 1976-1995 (YKYT…TQVT), 1998-2018 (YEES…FICT), 2021-2041 (YRQT…EGLV), 2091-2111 (YDLN…FNAN), and 2119-2139 (YEIL…MGRM). N2151 is a glycosylation site (N-linked (GlcNAc...) asparagine). YD repeat units follow at residues 2159–2179 (YDAD…WRYS), 2180–2200 (YDLN…LTPL), 2202–2222 (YDLR…DEDG), 2234–2254 (YNSN…TVQY), and 2256–2276 (YDGL…LQFF). An N-linked (GlcNAc...) asparagine glycan is attached at N2291. YD repeat units follow at residues 2302-2319 (YDLQ…GEEY) and 2320-2343 (YVAC…IKEI). Residue S2586 is modified to Phosphoserine. The N-linked (GlcNAc...) asparagine glycan is linked to N2608.

The protein belongs to the tenascin family. Teneurin subfamily. As to quaternary structure, homodimer; disulfide-linked. Heterodimer with either TENM2 or TENM3. May also form heterodimer with TENM4. Ten-1 ICD interacts with SORBS1 (via third SH3 domain). Interacts with MBD1 isoform 2. Ten-1 ICD interacts with HINT1. Once secreted, may also be cleaved to give rise to the TCAP-1 form. In terms of processing, derives from the plasma membrane form by proteolytic processing. Further proteolytic cleavage may generate 11.9 and 4.7 kDa bioactive peptides. Isoform 1 and isoform 2 are expressed in the brain. Isoform 2 is expressed in the granular layer of the dentate gyrus and the pyramidal layer (Py) of the CA1, CA2 and CA3 of the hippocampus (at protein level). Expressed in the cortex, thalamus, CA1, CA2, CA3, dentate gyrus and granular layer of the hippocampus. Weakly expressed in kidney, testis and lung.

It is found in the cell membrane. The protein localises to the cytoplasm. It localises to the secreted. Its subcellular location is the nucleus. The protein resides in the nucleus speckle. It is found in the nucleus matrix. The protein localises to the cytoskeleton. Functionally, involved in neural development, regulating the establishment of proper connectivity within the nervous system. May function as a cellular signal transducer. Its function is as follows. Plays a role in the regulation of neuroplasticity in the limbic system. Mediates a rapid reorganization of actin- and tubulin-based cytoskeleton elements with an increase in dendritic arborization and spine density formation of neurons in the hippocampus and amygdala. Induces BDNF transcription inhibition in neurons. Activates the mitogen-activated protein (MAP) kinase 2 (MEK2) and extracellular signal-regulated kinase (ERK) cascade. Also acts as a bioactive neuroprotective peptide on limbic neurons of the brain and regulates stress-induced behavior: attenuates alkalosis-associated necrotic cell death and the effects of corticotropin-releasing factor (CRF) on c-fos/FOS induction and on the reinstatement of cocaine seeking. In terms of biological role, induces gene transcription activation. The chain is Teneurin-1 (Tenm1) from Mus musculus (Mouse).